A 362-amino-acid polypeptide reads, in one-letter code: 3-dehydroquinate synthase (362 aa).

NAD(+) is bound by residues Asp71–Lys76, Gly105–Asp109, Thr129–Thr130, Lys142, Lys151, and Cys169–Thr172. Zn(2+) contacts are provided by Glu184, His247, and His264.

This sequence belongs to the sugar phosphate cyclases superfamily. Dehydroquinate synthase family. Co(2+) serves as cofactor. Zn(2+) is required as a cofactor. The cofactor is NAD(+).

It localises to the cytoplasm. The catalysed reaction is 7-phospho-2-dehydro-3-deoxy-D-arabino-heptonate = 3-dehydroquinate + phosphate. Its pathway is metabolic intermediate biosynthesis; chorismate biosynthesis; chorismate from D-erythrose 4-phosphate and phosphoenolpyruvate: step 2/7. Catalyzes the conversion of 3-deoxy-D-arabino-heptulosonate 7-phosphate (DAHP) to dehydroquinate (DHQ). The protein is 3-dehydroquinate synthase of Escherichia coli (strain 55989 / EAEC).